Consider the following 218-residue polypeptide: Probable transaldolase (218 aa).

Lys83 acts as the Schiff-base intermediate with substrate in catalysis.

Belongs to the transaldolase family. Type 3B subfamily.

The protein localises to the cytoplasm. It catalyses the reaction D-sedoheptulose 7-phosphate + D-glyceraldehyde 3-phosphate = D-erythrose 4-phosphate + beta-D-fructose 6-phosphate. Its pathway is carbohydrate degradation; pentose phosphate pathway; D-glyceraldehyde 3-phosphate and beta-D-fructose 6-phosphate from D-ribose 5-phosphate and D-xylulose 5-phosphate (non-oxidative stage): step 2/3. In terms of biological role, transaldolase is important for the balance of metabolites in the pentose-phosphate pathway. In Thermotoga petrophila (strain ATCC BAA-488 / DSM 13995 / JCM 10881 / RKU-1), this protein is Probable transaldolase.